A 146-amino-acid chain; its full sequence is Large ribosomal subunit protein uL15 (146 aa).

The tract at residues 1-56 (MGLRLNELSPGVGAKKTAQRRGRGIGSGLGKTGGRGVKGQKSRSGSSVRSGFEGGQ) is disordered. Over residues 24–37 (GIGSGLGKTGGRGV) the composition is skewed to gly residues.

Belongs to the universal ribosomal protein uL15 family. In terms of assembly, part of the 50S ribosomal subunit.

Binds to the 23S rRNA. The polypeptide is Large ribosomal subunit protein uL15 (Psychrobacter arcticus (strain DSM 17307 / VKM B-2377 / 273-4)).